The primary structure comprises 197 residues: Large ribosomal subunit protein uL18 (197 aa).

The protein belongs to the universal ribosomal protein uL18 family. As to quaternary structure, part of the 50S ribosomal subunit. Contacts the 5S and 23S rRNAs.

In terms of biological role, this is one of the proteins that bind and probably mediate the attachment of the 5S RNA into the large ribosomal subunit, where it forms part of the central protuberance. The protein is Large ribosomal subunit protein uL18 of Sulfolobus acidocaldarius (strain ATCC 33909 / DSM 639 / JCM 8929 / NBRC 15157 / NCIMB 11770).